Reading from the N-terminus, the 349-residue chain is Small ribosomal subunit protein uS2 (349 aa).

The protein belongs to the universal ribosomal protein uS2 family.

This is Small ribosomal subunit protein uS2 from Methylocella silvestris (strain DSM 15510 / CIP 108128 / LMG 27833 / NCIMB 13906 / BL2).